Consider the following 425-residue polypeptide: Bifunctional phosphoribosylaminoimidazole carboxylase/phosphoribosylaminoimidazole succinocarboxamide synthetase (425 aa).

An N-acetylalanine modification is found at Ala-2. Residues 2-260 (ATAEVLNIGR…WVADRVELLL (259 aa)) are SAICAR synthetase domain. Tyr-22 carries the post-translational modification Phosphotyrosine. Ser-27 carries the phosphoserine modification. Lys-36 is modified (N6-acetyllysine). Position 107 is a phosphoserine (Ser-107). Thr-238 carries the phosphothreonine modification. Lys-247 is subject to N6-acetyllysine. Residues 261 to 266 (KSNSQC) form a linker region. Residues 267 to 425 (RVVVLMGSTS…ADKKIRECNL (159 aa)) form an AIR carboxylase domain region. The residue at position 274 (Ser-274) is a Phosphoserine. Ser-332 is a binding site for CO2.

In the N-terminal section; belongs to the SAICAR synthetase family. The protein in the C-terminal section; belongs to the AIR carboxylase family. Class II subfamily. As to quaternary structure, homooctamer.

It catalyses the reaction 5-amino-1-(5-phospho-D-ribosyl)imidazole-4-carboxylate + L-aspartate + ATP = (2S)-2-[5-amino-1-(5-phospho-beta-D-ribosyl)imidazole-4-carboxamido]succinate + ADP + phosphate + 2 H(+). The catalysed reaction is 5-amino-1-(5-phospho-D-ribosyl)imidazole-4-carboxylate + H(+) = 5-amino-1-(5-phospho-beta-D-ribosyl)imidazole + CO2. Its pathway is purine metabolism; IMP biosynthesis via de novo pathway; 5-amino-1-(5-phospho-D-ribosyl)imidazole-4-carboxamide from 5-amino-1-(5-phospho-D-ribosyl)imidazole-4-carboxylate: step 1/2. It participates in purine metabolism; IMP biosynthesis via de novo pathway; 5-amino-1-(5-phospho-D-ribosyl)imidazole-4-carboxylate from 5-amino-1-(5-phospho-D-ribosyl)imidazole (carboxylase route): step 1/1. Its function is as follows. Bifunctional phosphoribosylaminoimidazole carboxylase and phosphoribosylaminoimidazole succinocarboxamide synthetase catalyzing two reactions of the de novo purine biosynthetic pathway. This Rattus norvegicus (Rat) protein is Bifunctional phosphoribosylaminoimidazole carboxylase/phosphoribosylaminoimidazole succinocarboxamide synthetase.